A 639-amino-acid chain; its full sequence is C-type lectin domain-containing protein 160 (639 aa).

A signal peptide spans 1 to 19 (MDLKSWILLSCTLLPLSVT). 2 VWFA domains span residues 31–178 (DIII…VGIG) and 289–474 (DIIF…LCQV). One can recognise a C-type lectin domain in the interval 491–618 (KYGECFFPTK…WNSVSCTSEY (128 aa)). A disulfide bridge links C594 with C614.

The protein localises to the secreted. In Caenorhabditis elegans, this protein is C-type lectin domain-containing protein 160 (clec-160).